Here is a 432-residue protein sequence, read N- to C-terminus: DNA damage-binding protein 2 (432 aa).

The segment at 1–31 (MAPKKCPETQKSPDVAVLLRSKSRRGPQELE) is disordered. N6-acetyllysine is present on residues Lys35 and Lys77. Required for interaction with DDB1 regions lie at residues 68-79 (SIVRDLYQHKLG) and 87-98 (QQGLQKSFLHSL). WD repeat units follow at residues 116–151 (SLAWHPTHPSTLAVGSKGGDIMIWNFGIKDKPIFLK), 159–194 (ITGLKFNHLNTNQFFASSMEGTTRLQDFKGNILRVY), 203–238 (WFCSLDVSAKSRVVVTGDNMGHVILLSTDGKELWNL), 244–287 (KVAH…SLPH), and 290–329 (PVNAACFSPDGARLLTTDQNNEIRVYSASQWDSPLNLISH). The short motif at 256–274 (WLLATASIDQTVKIWDLRQ) is the DWD box element. The interval 334–336 (FQH) is photolesion recognition. WD repeat units lie at residues 343-386 (TWHS…MCQL) and 396-420 (SLNEFNPMGDTLASTMGYHILIWSQ).

This sequence belongs to the WD repeat DDB2/WDR76 family. Component of the UV-DDB complex which includes DDB1 and DDB2. The UV-DDB complex interacts with monoubiquitinated histone H2A and binds to XPC via the DDB2 subunit. Component of the DCX (DDB1-CUL4-X-box) E3 ubiquitin-protein ligase complex DDB1-CUL4-ROC1 (also known as CUL4-DDB-ROC1 and CUL4-DDB-RBX1), which includes CUL4A or CUL4B, DDB1, DDB2 and RBX1. DDB2 may function as the substrate recognition module within this complex. The DDB1-CUL4-ROC1 complex may associate with the COP9 signalosome, and this inhibits the E3 ubiquitin-protein ligase activity of the complex. A large number of other DCX complexes may also exist in which an alternate substrate targeting subunit replaces DDB2. These targeting subunits are generally known as DCAF (DDB1- and CUL4-associated factor) or CDW (CUL4-DDB1-associated WD40-repeat) proteins. Phosphorylation by ABL1 negatively regulate UV-DDB activity. Post-translationally, ubiquitinated by CUL4A in response to UV irradiation. Ubiquitination appears to both impair DNA-binding and promotes ubiquitin-dependent proteolysis. Degradation of DDB2 at sites of DNA damage may be a prerequisite for their recognition by XPC and subsequent repair. CUL4A-mediated degradation appears to be promoted by ABL1. In terms of processing, ubiquitinated, leading to proteasomal degradation, and deubiquitinated by USP24. Deubiquitinated by USP44; leading to its stabilization on DNA lesions. Acetylated. Deacetylation by SIRT6 in response to UV stress facilitates nucleotide excision repair pathway (the NER pathway) transduction. In terms of tissue distribution, expressed in bone marrow, liver, lung, muscle, pancreas and spleen.

Its subcellular location is the nucleus. It is found in the chromosome. It functions in the pathway protein modification; protein ubiquitination. Protein, which is both involved in DNA repair and protein ubiquitination, as part of the UV-DDB complex and DCX (DDB1-CUL4-X-box) complexes, respectively. Core component of the UV-DDB complex (UV-damaged DNA-binding protein complex), a complex that recognizes UV-induced DNA damage and recruit proteins of the nucleotide excision repair pathway (the NER pathway) to initiate DNA repair. The UV-DDB complex preferentially binds to cyclobutane pyrimidine dimers (CPD), 6-4 photoproducts (6-4 PP), apurinic sites and short mismatches. Also functions as the substrate recognition module for the DCX (DDB2-CUL4-X-box) E3 ubiquitin-protein ligase complex DDB2-CUL4-ROC1 (also known as CUL4-DDB-ROC1 and CUL4-DDB-RBX1). The DDB2-CUL4-ROC1 complex may ubiquitinate histone H2A, histone H3 and histone H4 at sites of UV-induced DNA damage. The ubiquitination of histones may facilitate their removal from the nucleosome and promote subsequent DNA repair. The DDB2-CUL4-ROC1 complex also ubiquitinates XPC, which may enhance DNA-binding by XPC and promote NER. The DDB2-CUL4-ROC1 complex also ubiquitinates KAT7/HBO1 in response to DNA damage, leading to its degradation: recognizes KAT7/HBO1 following phosphorylation by ATR. This chain is DNA damage-binding protein 2 (Ddb2), found in Mus musculus (Mouse).